The primary structure comprises 460 residues: Argininosuccinate lyase (460 aa).

This sequence belongs to the lyase 1 family. Argininosuccinate lyase subfamily.

The protein resides in the cytoplasm. The enzyme catalyses 2-(N(omega)-L-arginino)succinate = fumarate + L-arginine. It participates in amino-acid biosynthesis; L-arginine biosynthesis; L-arginine from L-ornithine and carbamoyl phosphate: step 3/3. The chain is Argininosuccinate lyase from Alkaliphilus metalliredigens (strain QYMF).